Here is a 1464-residue protein sequence, read N- to C-terminus: DNA-directed RNA polymerase subunit beta' (1464 aa).

Zn(2+) is bound by residues Cys-66, Cys-68, Cys-96, and Cys-99. The Mg(2+) site is built by Asp-491, Asp-493, and Asp-495. Zn(2+) is bound by residues Cys-838, Cys-912, Cys-919, and Cys-922. Residues 1143–1200 (NDDDDDDYYDSDYYDYYDYSDDDDDYDDYDDYYYNYDDDENDNDNDYDYDYDYDYDYD) show a composition bias toward acidic residues. Residues 1143–1229 (NDDDDDDYYD…YDYDYDSDSD (87 aa)) are disordered. The segment covering 1204 to 1219 (HNSYSHNSYSPSSNDN) has biased composition (low complexity). Over residues 1220 to 1229 (YDYDYDSDSD) the composition is skewed to acidic residues.

This sequence belongs to the RNA polymerase beta' chain family. As to quaternary structure, the RNAP catalytic core consists of 2 alpha, 1 beta, 1 beta' and 1 omega subunit. When a sigma factor is associated with the core the holoenzyme is formed, which can initiate transcription. Mg(2+) is required as a cofactor. The cofactor is Zn(2+).

The enzyme catalyses RNA(n) + a ribonucleoside 5'-triphosphate = RNA(n+1) + diphosphate. Its function is as follows. DNA-dependent RNA polymerase catalyzes the transcription of DNA into RNA using the four ribonucleoside triphosphates as substrates. This is DNA-directed RNA polymerase subunit beta' from Karelsulcia muelleri (strain GWSS) (Sulcia muelleri).